Consider the following 412-residue polypeptide: Translation initiation factor 2 subunit gamma (412 aa).

The tr-type G domain maps to 7-203; sequence QPEVNIGLVG…AIESEIPTPD (197 aa). Residues 16–23 are G1; that stretch reads GHVDHGKT. Residues D19, T23, G44, and S46 each contribute to the Mg(2+) site. 19 to 24 contacts GTP; sequence DHGKTT. The segment at 44–48 is G2; the sequence is GISIR. The segment at 90 to 93 is G3; that stretch reads DAPG. GTP contacts are provided by residues 146–149 and 181–183; these read NKVD and SAQ. The G4 stretch occupies residues 146-149; the sequence is NKVD. The G5 stretch occupies residues 181-183; it reads SAQ.

It belongs to the TRAFAC class translation factor GTPase superfamily. Classic translation factor GTPase family. EIF2G subfamily. In terms of assembly, heterotrimer composed of an alpha, a beta and a gamma chain. Requires Mg(2+) as cofactor.

The enzyme catalyses GTP + H2O = GDP + phosphate + H(+). In terms of biological role, eIF-2 functions in the early steps of protein synthesis by forming a ternary complex with GTP and initiator tRNA. This is Translation initiation factor 2 subunit gamma from Halorubrum lacusprofundi (strain ATCC 49239 / DSM 5036 / JCM 8891 / ACAM 34).